Here is a 105-residue protein sequence, read N- to C-terminus: Cyclotide vibi-J (105 aa).

A signal peptide spans 1-9; the sequence is AAFALPALA. A propeptide spanning residues 10–71 is cleaved from the precursor; the sequence is TSFEKDFITH…KSSNSINALG (62 aa). Residues 72–102 constitute a cross-link (cyclopeptide (Gly-Asn)); that stretch reads GTFPCGESCVWIPCISKVIGCACKSKVCYKN. Cystine bridges form between Cys76-Cys92, Cys80-Cys94, and Cys85-Cys99. Residues 103-105 constitute a propeptide that is removed on maturation; sequence SLA.

This is a cyclic peptide.

Functionally, probably participates in a plant defense mechanism. The chain is Cyclotide vibi-J from Viola biflora (Yellow wood violet).